The primary structure comprises 133 residues: Osteocrin (133 aa).

The first 27 residues, 1–27, serve as a signal peptide directing secretion; the sequence is MLDWRLASAHFILAVTLTLWSSGKVLS. The residue at position 132 (Arg132) is an Arginine amide.

This sequence belongs to the Osteocrin family. As to quaternary structure, interacts with NPR3. In terms of tissue distribution, enriched in neocortical regions of the developing cerebral cortex. Not expressed in other compartments of the neocortical wall or in brain regions such as the hippocampus, striatum, mediodorsal nucleus of the thalamus and cerebellum. Also expressed in bone. In developing neonatal rib bone, present at high level in osteoblasts on bone-forming surfaces, in newly incorporated osteocytes and in some late hypertrophic chondrocytes (at protein level). In adult bone, localizes specifically to osteoblasts and young osteocytes at bone-forming sites (at protein level).

It is found in the secreted. Its function is as follows. Hormone that acts as a regulator of dendritic growth in the developing cerebral cortex in response to sensory experience. Induced in the brain following membrane depolarization and inhibits dendritic branching in neurons of the developing cortex. Probably acts by binding to natriuretic peptide receptor NPR3/NPR-C, thereby preventing binding between NPR3/NPR-C and natriuretic peptides, leading to increase cGMP production. The chain is Osteocrin from Homo sapiens (Human).